The primary structure comprises 223 residues: Endonuclease V (223 aa).

Residues D35 and D103 each coordinate Mg(2+).

This sequence belongs to the endonuclease V family. It depends on Mg(2+) as a cofactor.

Its subcellular location is the cytoplasm. The catalysed reaction is Endonucleolytic cleavage at apurinic or apyrimidinic sites to products with a 5'-phosphate.. Functionally, DNA repair enzyme involved in the repair of deaminated bases. Selectively cleaves double-stranded DNA at the second phosphodiester bond 3' to a deoxyinosine leaving behind the intact lesion on the nicked DNA. In Klebsiella pneumoniae subsp. pneumoniae (strain ATCC 700721 / MGH 78578), this protein is Endonuclease V.